The following is a 331-amino-acid chain: Ubiquinone biosynthesis protein UbiU (331 aa).

[4Fe-4S] cluster-binding residues include C169, C176, C193, and C232.

Belongs to the peptidase U32 family. UbiU subfamily. As to quaternary structure, forms a heterodimer with UbiV. The cofactor is [4Fe-4S] cluster.

The protein operates within cofactor biosynthesis; ubiquinone biosynthesis. In terms of biological role, required for O(2)-independent ubiquinone (coenzyme Q) biosynthesis. Together with UbiV, is essential for the C6-hydroxylation reaction in the oxygen-independent ubiquinone biosynthesis pathway. In Escherichia coli (strain K12), this protein is Ubiquinone biosynthesis protein UbiU.